A 489-amino-acid chain; its full sequence is Cytochrome P450 71A26 (489 aa).

The chain crosses the membrane as a helical span at residues 1 to 21 (MMIMFFLLCSIIFVVTIIIFR). C431 contributes to the heme binding site.

This sequence belongs to the cytochrome P450 family. Requires heme as cofactor.

It localises to the membrane. This Arabidopsis thaliana (Mouse-ear cress) protein is Cytochrome P450 71A26 (CYP71A26).